A 224-amino-acid polypeptide reads, in one-letter code: Phosphoribosylformylglycinamidine synthase subunit PurQ (224 aa).

The 223-residue stretch at 2–224 folds into the Glutamine amidotransferase type-1 domain; it reads KIAVIVFPGS…SLLEEGKVKG (223 aa). The Nucleophile role is filled by cysteine 86. Residues histidine 195 and glutamate 197 contribute to the active site.

In terms of assembly, part of the FGAM synthase complex composed of 1 PurL, 1 PurQ and 2 PurS subunits.

It localises to the cytoplasm. It catalyses the reaction N(2)-formyl-N(1)-(5-phospho-beta-D-ribosyl)glycinamide + L-glutamine + ATP + H2O = 2-formamido-N(1)-(5-O-phospho-beta-D-ribosyl)acetamidine + L-glutamate + ADP + phosphate + H(+). The catalysed reaction is L-glutamine + H2O = L-glutamate + NH4(+). It participates in purine metabolism; IMP biosynthesis via de novo pathway; 5-amino-1-(5-phospho-D-ribosyl)imidazole from N(2)-formyl-N(1)-(5-phospho-D-ribosyl)glycinamide: step 1/2. Its function is as follows. Part of the phosphoribosylformylglycinamidine synthase complex involved in the purines biosynthetic pathway. Catalyzes the ATP-dependent conversion of formylglycinamide ribonucleotide (FGAR) and glutamine to yield formylglycinamidine ribonucleotide (FGAM) and glutamate. The FGAM synthase complex is composed of three subunits. PurQ produces an ammonia molecule by converting glutamine to glutamate. PurL transfers the ammonia molecule to FGAR to form FGAM in an ATP-dependent manner. PurS interacts with PurQ and PurL and is thought to assist in the transfer of the ammonia molecule from PurQ to PurL. The protein is Phosphoribosylformylglycinamidine synthase subunit PurQ of Ligilactobacillus salivarius (strain UCC118) (Lactobacillus salivarius).